A 599-amino-acid polypeptide reads, in one-letter code: Sulfite reductase [NADPH] flavoprotein alpha-component (599 aa).

Positions 64–202 (ITIISASQTG…AASEWRARVV (139 aa)) constitute a Flavodoxin-like domain. Residues 70-75 (SQTGNA), 117-120 (STQG), and 153-162 (LGDSSYEFFC) each bind FMN. In terms of domain architecture, FAD-binding FR-type spans 234 to 448 (DAPLAASLSV…IEHNDNFRLP (215 aa)). FAD is bound by residues Thr-322, Ala-356, 386–389 (RLYS), 404–406 (TVG), Tyr-410, and 419–422 (GGAS). NADP(+)-binding positions include 519 to 520 (SR), 525 to 529 (KIYVQ), and Asp-561. Residue Tyr-599 coordinates FAD.

It belongs to the NADPH-dependent sulphite reductase flavoprotein subunit CysJ family. The protein in the N-terminal section; belongs to the flavodoxin family. This sequence in the C-terminal section; belongs to the flavoprotein pyridine nucleotide cytochrome reductase family. Alpha(8)-beta(8). The alpha component is a flavoprotein, the beta component is a hemoprotein. FAD is required as a cofactor. FMN serves as cofactor.

The enzyme catalyses hydrogen sulfide + 3 NADP(+) + 3 H2O = sulfite + 3 NADPH + 4 H(+). It participates in sulfur metabolism; hydrogen sulfide biosynthesis; hydrogen sulfide from sulfite (NADPH route): step 1/1. Its function is as follows. Component of the sulfite reductase complex that catalyzes the 6-electron reduction of sulfite to sulfide. This is one of several activities required for the biosynthesis of L-cysteine from sulfate. The flavoprotein component catalyzes the electron flow from NADPH -&gt; FAD -&gt; FMN to the hemoprotein component. This Escherichia coli O6:H1 (strain CFT073 / ATCC 700928 / UPEC) protein is Sulfite reductase [NADPH] flavoprotein alpha-component.